The sequence spans 260 residues: Zinc import ATP-binding protein ZnuC (260 aa).

An ABC transporter domain is found at 14–229 (LTARNLCADR…PEFARLFGDQ (216 aa)). 46 to 53 (GPNGAGKS) serves as a coordination point for ATP.

Belongs to the ABC transporter superfamily. Zinc importer (TC 3.A.1.15.5) family. The complex is composed of two ATP-binding proteins (ZnuC), two transmembrane proteins (ZnuB) and a solute-binding protein (ZnuA).

Its subcellular location is the cell inner membrane. The catalysed reaction is Zn(2+)(out) + ATP(in) + H2O(in) = Zn(2+)(in) + ADP(in) + phosphate(in) + H(+)(in). Part of the ABC transporter complex ZnuABC involved in zinc import. Responsible for energy coupling to the transport system. In Magnetococcus marinus (strain ATCC BAA-1437 / JCM 17883 / MC-1), this protein is Zinc import ATP-binding protein ZnuC.